A 366-amino-acid chain; its full sequence is Glutathione S-transferase omega-like 3 (366 aa).

Cysteine 46 is a catalytic residue. The region spanning 197–349 is the GST C-terminal domain; it reads PRSLEAQITE…LGYTRSQPRV (153 aa).

Belongs to the GST superfamily. Omega family.

It localises to the cytoplasm. It carries out the reaction RX + glutathione = an S-substituted glutathione + a halide anion + H(+). Its function is as follows. Active as '1-Cys' thiol transferase against beta-hydroxyethyl disulfide (HED), as dehydroascorbate reductase and as dimethylarsinic acid reductase, while not active against the standard GST substrate 1-chloro-2,4-dinitrobenzene (CDNB). The chain is Glutathione S-transferase omega-like 3 (GTO3) from Saccharomyces cerevisiae (strain ATCC 204508 / S288c) (Baker's yeast).